We begin with the raw amino-acid sequence, 91 residues long: Small ribosomal subunit protein bS16 (91 aa).

It belongs to the bacterial ribosomal protein bS16 family.

The protein is Small ribosomal subunit protein bS16 of Lacticaseibacillus casei (strain BL23) (Lactobacillus casei).